A 228-amino-acid polypeptide reads, in one-letter code: Lipoprotein-releasing system ATP-binding protein LolD 2 (228 aa).

Positions 9–228 (RGLERVYKTE…KDGHLELQRV (220 aa)) constitute an ABC transporter domain. Position 42-49 (42-49 (GPSGSGKS)) interacts with ATP.

It belongs to the ABC transporter superfamily. Lipoprotein translocase (TC 3.A.1.125) family. As to quaternary structure, the complex is composed of two ATP-binding proteins (LolD) and two transmembrane proteins (LolC and LolE).

The protein localises to the cell inner membrane. Part of the ABC transporter complex LolCDE involved in the translocation of mature outer membrane-directed lipoproteins, from the inner membrane to the periplasmic chaperone, LolA. Responsible for the formation of the LolA-lipoprotein complex in an ATP-dependent manner. The polypeptide is Lipoprotein-releasing system ATP-binding protein LolD 2 (Caulobacter vibrioides (strain ATCC 19089 / CIP 103742 / CB 15) (Caulobacter crescentus)).